Here is an 83-residue protein sequence, read N- to C-terminus: uncharacterized protein (83 aa).

This is an uncharacterized protein from Lactuca sativa (Garden lettuce).